The sequence spans 498 residues: NADH-quinone oxidoreductase subunit N 2 (498 aa).

Helical transmembrane passes span 19-39 (VATQ…IALF), 47-67 (IVGY…IPLW), 83-103 (YSLT…VLSL), 114-134 (SEYY…AQGA), 136-156 (LIIL…LTGF), 171-191 (LLIG…LYGA), 215-235 (IYLL…VAMA), 249-269 (PTPI…AALL), 282-302 (IWAP…NIGA), 317-337 (IGHA…GGIA), 345-365 (VLLY…VLIA), 389-409 (LAVA…TGGF), 420-440 (WLSG…IAAF), and 468-488 (AGLA…TPAI).

It belongs to the complex I subunit 2 family. NDH-1 is composed of 14 different subunits. Subunits NuoA, H, J, K, L, M, N constitute the membrane sector of the complex.

Its subcellular location is the cell membrane. The enzyme catalyses a quinone + NADH + 5 H(+)(in) = a quinol + NAD(+) + 4 H(+)(out). Its function is as follows. NDH-1 shuttles electrons from NADH, via FMN and iron-sulfur (Fe-S) centers, to quinones in the respiratory chain. The immediate electron acceptor for the enzyme in this species is believed to be ubiquinone. Couples the redox reaction to proton translocation (for every two electrons transferred, four hydrogen ions are translocated across the cytoplasmic membrane), and thus conserves the redox energy in a proton gradient. This Roseiflexus castenholzii (strain DSM 13941 / HLO8) protein is NADH-quinone oxidoreductase subunit N 2.